The primary structure comprises 341 residues: DNA-directed RNA polymerase subunit alpha (341 aa).

The alpha N-terminal domain (alpha-NTD) stretch occupies residues 1–233 (MVREEVPVST…DLFIPFLHAE (233 aa)). The interval 266–341 (IILKRIFIDQ…LKNSNQFESR (76 aa)) is alpha C-terminal domain (alpha-CTD).

Belongs to the RNA polymerase alpha chain family. In plastids the minimal PEP RNA polymerase catalytic core is composed of four subunits: alpha, beta, beta', and beta''. When a (nuclear-encoded) sigma factor is associated with the core the holoenzyme is formed, which can initiate transcription.

The protein localises to the plastid. It localises to the chloroplast. It carries out the reaction RNA(n) + a ribonucleoside 5'-triphosphate = RNA(n+1) + diphosphate. Its function is as follows. DNA-dependent RNA polymerase catalyzes the transcription of DNA into RNA using the four ribonucleoside triphosphates as substrates. The protein is DNA-directed RNA polymerase subunit alpha of Nymphaea alba (White water-lily).